The chain runs to 76 residues: Exodeoxyribonuclease 7 small subunit (76 aa).

Belongs to the XseB family. In terms of assembly, heterooligomer composed of large and small subunits.

It localises to the cytoplasm. It catalyses the reaction Exonucleolytic cleavage in either 5'- to 3'- or 3'- to 5'-direction to yield nucleoside 5'-phosphates.. In terms of biological role, bidirectionally degrades single-stranded DNA into large acid-insoluble oligonucleotides, which are then degraded further into small acid-soluble oligonucleotides. The protein is Exodeoxyribonuclease 7 small subunit of Geobacter metallireducens (strain ATCC 53774 / DSM 7210 / GS-15).